Consider the following 89-residue polypeptide: Small ribosomal subunit protein uS15 (89 aa).

Belongs to the universal ribosomal protein uS15 family. As to quaternary structure, part of the 30S ribosomal subunit. Forms a bridge to the 50S subunit in the 70S ribosome, contacting the 23S rRNA.

One of the primary rRNA binding proteins, it binds directly to 16S rRNA where it helps nucleate assembly of the platform of the 30S subunit by binding and bridging several RNA helices of the 16S rRNA. In terms of biological role, forms an intersubunit bridge (bridge B4) with the 23S rRNA of the 50S subunit in the ribosome. The polypeptide is Small ribosomal subunit protein uS15 (Nocardia farcinica (strain IFM 10152)).